The following is a 426-amino-acid chain: 3-phosphoshikimate 1-carboxyvinyltransferase (426 aa).

3-phosphoshikimate contacts are provided by K22, S23, and R27. Phosphoenolpyruvate is bound at residue K22. Residues G96 and R124 each coordinate phosphoenolpyruvate. Residues S170, S171, Q172, S198, D314, N337, and K341 each coordinate 3-phosphoshikimate. Q172 provides a ligand contact to phosphoenolpyruvate. D314 serves as the catalytic Proton acceptor. Phosphoenolpyruvate-binding residues include R345, R387, and K412.

It belongs to the EPSP synthase family. As to quaternary structure, monomer.

It is found in the cytoplasm. The enzyme catalyses 3-phosphoshikimate + phosphoenolpyruvate = 5-O-(1-carboxyvinyl)-3-phosphoshikimate + phosphate. It functions in the pathway metabolic intermediate biosynthesis; chorismate biosynthesis; chorismate from D-erythrose 4-phosphate and phosphoenolpyruvate: step 6/7. Functionally, catalyzes the transfer of the enolpyruvyl moiety of phosphoenolpyruvate (PEP) to the 5-hydroxyl of shikimate-3-phosphate (S3P) to produce enolpyruvyl shikimate-3-phosphate and inorganic phosphate. This Photobacterium damsela subsp. piscicida (Pasteurella piscicida) protein is 3-phosphoshikimate 1-carboxyvinyltransferase.